Consider the following 216-residue polypeptide: MSELKIKAAKAAIAYIEDDMVIGVGTGSTVNFFIKELAAIKHKIEACVASSKATEALLRAEGIPVIDLNSVQDLPIYVDGADEVNERGEMIKGGGGALTREKIVANVATQFICIVDESKVVKRLGEFPVAVEVIPMARSFVARQIVKLGGDPEYREGFVTDNGNIILDVFNLNFSTPMALEDSLNVIPGVVENGVFAKRLADKVLVASASGVNNLK.

Residues 26 to 29 (TGST), 79 to 82 (DGAD), and 92 to 95 (KGGG) each bind substrate. The active-site Proton acceptor is Glu101. Lys119 provides a ligand contact to substrate.

This sequence belongs to the ribose 5-phosphate isomerase family. Homodimer.

It catalyses the reaction aldehydo-D-ribose 5-phosphate = D-ribulose 5-phosphate. It functions in the pathway carbohydrate degradation; pentose phosphate pathway; D-ribose 5-phosphate from D-ribulose 5-phosphate (non-oxidative stage): step 1/1. Functionally, catalyzes the reversible conversion of ribose-5-phosphate to ribulose 5-phosphate. This Legionella pneumophila (strain Corby) protein is Ribose-5-phosphate isomerase A.